Here is a 549-residue protein sequence, read N- to C-terminus: Glucose-6-phosphate isomerase (549 aa).

The active-site Proton donor is the Glu355. Active-site residues include His386 and Lys514.

Belongs to the GPI family.

Its subcellular location is the cytoplasm. The enzyme catalyses alpha-D-glucose 6-phosphate = beta-D-fructose 6-phosphate. Its pathway is carbohydrate biosynthesis; gluconeogenesis. It participates in carbohydrate degradation; glycolysis; D-glyceraldehyde 3-phosphate and glycerone phosphate from D-glucose: step 2/4. In terms of biological role, catalyzes the reversible isomerization of glucose-6-phosphate to fructose-6-phosphate. This Enterobacter sp. (strain 638) protein is Glucose-6-phosphate isomerase.